We begin with the raw amino-acid sequence, 143 residues long: MATVPGQLIWEIVKRNNCFLVKQFGRGNAKVQFSKESNNLVNINSYKHSGLANKKTVTIQAAGKDQGVVLGTTKTKRQNKPKLSVNKSILKKEFSRMSKVVANQVVDNYYRPDLKKAALARLSAISKGLRVAKSGPKRRNRQA.

Belongs to the eukaryotic ribosomal protein eL28 family.

The protein is Large ribosomal subunit protein eL28y (RPL28C) of Arabidopsis thaliana (Mouse-ear cress).